Here is a 987-residue protein sequence, read N- to C-terminus: Ephrin type-B receptor 4 (987 aa).

Residues 1–15 (MELRVLLCWASLAAA) form the signal peptide. Topologically, residues 16 to 539 (LEETLLNTKL…ESEGWREQLA (524 aa)) are extracellular. In terms of domain architecture, Eph LBD spans 17 to 202 (EETLLNTKLE…FYKKCAQLTV (186 aa)). Disulfide bonds link C61-C184 and C97-C107. 3 N-linked (GlcNAc...) asparagine glycosylation sites follow: N203, N335, and N426. Fibronectin type-III domains lie at 323-432 (PPSA…TDRE) and 436-529 (AVSD…TQLD). A helical membrane pass occupies residues 540 to 560 (LIAGTAVVGVVLVLVVIVVAV). Residues 561–987 (LCLRKQSNGR…GGTGGPAPQY (427 aa)) lie on the Cytoplasmic side of the membrane. The Protein kinase domain maps to 615–899 (VKIEEVIGAG…ENGGASHPLL (285 aa)). Residues 621 to 629 (IGAGEFGEV) and K647 contribute to the ATP site. D740 serves as the catalytic Proton acceptor. S769, S770, S911, and S943 each carry phosphoserine. In terms of domain architecture, SAM spans 907–971 (SAFGSVGEWL…LASVQHMKSQ (65 aa)). Residues 965–987 (VQHMKSQAKPGTPGGTGGPAPQY) are disordered. A Phosphothreonine modification is found at T976. The span at 976 to 987 (TPGGTGGPAPQY) shows a compositional bias: gly residues. The PDZ-binding signature appears at 985-987 (PQY). Y987 carries the phosphotyrosine modification.

Belongs to the protein kinase superfamily. Tyr protein kinase family. Ephrin receptor subfamily. As to quaternary structure, heterotetramer upon binding of the ligand. The heterotetramer is composed of an ephrin dimer and a receptor dimer. Oligomerization is probably required to induce biological responses. Interacts with RASA1; the interaction depends on EPHB4 tyrosine-phosphorylation. Post-translationally, phosphorylated; autophosphorylation is stimulated by EFNB2. Abundantly expressed in placenta but also detected in kidney, liver, lung, pancreas, skeletal muscle and heart. Expressed in primitive and myeloid, but not lymphoid, hematopoietic cells. Also observed in cell lines derived from liver, breast, colon, lung, melanocyte and cervix.

Its subcellular location is the cell membrane. It catalyses the reaction L-tyrosyl-[protein] + ATP = O-phospho-L-tyrosyl-[protein] + ADP + H(+). Its function is as follows. Receptor tyrosine kinase which binds promiscuously transmembrane ephrin-B family ligands residing on adjacent cells, leading to contact-dependent bidirectional signaling into neighboring cells. The signaling pathway downstream of the receptor is referred to as forward signaling while the signaling pathway downstream of the ephrin ligand is referred to as reverse signaling. Together with its cognate ligand/functional ligand EFNB2 it is involved in the regulation of cell adhesion and migration, and plays a central role in heart morphogenesis, angiogenesis and blood vessel remodeling and permeability. EPHB4-mediated forward signaling controls cellular repulsion and segregation from EFNB2-expressing cells. The chain is Ephrin type-B receptor 4 (EPHB4) from Homo sapiens (Human).